Here is a 322-residue protein sequence, read N- to C-terminus: Probable 5-dehydro-4-deoxyglucarate dehydratase 2 (322 aa).

It belongs to the DapA family.

The catalysed reaction is 5-dehydro-4-deoxy-D-glucarate + H(+) = 2,5-dioxopentanoate + CO2 + H2O. It participates in carbohydrate acid metabolism; D-glucarate degradation; 2,5-dioxopentanoate from D-glucarate: step 2/2. The polypeptide is Probable 5-dehydro-4-deoxyglucarate dehydratase 2 (Streptomyces coelicolor (strain ATCC BAA-471 / A3(2) / M145)).